The primary structure comprises 146 residues: Leghemoglobin-3 (146 aa).

One can recognise a Globin domain in the interval 2-146; that stretch reads GFTDKQEALV…LATAIKKAMV (145 aa). Nitrated tyrosine is present on Y29. S44 contacts heme b. S44 is modified (phosphoserine). Residue H61 coordinates O2. Heme b contacts are provided by K64, H93, and K96. Y134 is modified (nitrated tyrosine).

Belongs to the plant globin family. As to quaternary structure, monomer. Nitrated in effective nodules and particularly in hypoxic conditions; this mechanism may play a protective role in the symbiosis by buffering toxic peroxynitrite NO(2)(-). Nitration level decrease during nodule senescence. In terms of processing, phosphorylation at Ser-44 disrupts the molecular environment of its porphyrin ring oxygen binding pocket, thus leading to a reduced oxygen consumption and to the delivery of oxygen O(2) to symbiosomes. As to expression, root nodules.

It is found in the cytoplasm. The protein resides in the cytosol. Its subcellular location is the nucleus. Its function is as follows. Leghemoglobin that reversibly binds oxygen O(2) through a pentacoordinated heme iron. In root nodules, facilitates the diffusion of oxygen to the bacteroids while preventing the bacterial nitrogenase from being inactivated by buffering dioxygen, nitric oxide and carbon monoxide, and promoting the formation of reactive oxygen species (ROS, e.g. H(2)O(2)). This role is essential for symbiotic nitrogen fixation (SNF). In Medicago sativa (Alfalfa), this protein is Leghemoglobin-3.